The chain runs to 373 residues: Leucine-, isoleucine-, valine-, threonine-, and alanine-binding protein (373 aa).

An N-terminal signal peptide occupies residues 1 to 26 (MKKGTQRLSRLFAAMAIAGFASYSMA). A disulfide bridge connects residues C80 and C105.

The protein belongs to the leucine-binding protein family.

The protein localises to the periplasm. Functionally, component of the high-affinity leucine, isoleucine, valine transport system I (LIV-I), which is operative without Na(+) and is specific for alanine and threonine, in addition to branched-chain amino acids. Binds L-leucine, L-isoleucine, L-valine, L-threonine and L-alanine with nanomolar affinities. Can also bind L-homoserine with high affinity. The protein is Leucine-, isoleucine-, valine-, threonine-, and alanine-binding protein (braC) of Pseudomonas aeruginosa (strain ATCC 15692 / DSM 22644 / CIP 104116 / JCM 14847 / LMG 12228 / 1C / PRS 101 / PAO1).